We begin with the raw amino-acid sequence, 252 residues long: NAD(P)H-quinone oxidoreductase subunit K (252 aa).

Cysteine 73, cysteine 74, cysteine 138, and cysteine 169 together coordinate [4Fe-4S] cluster. Positions 225–236 (ASTQKQALSPSQ) are enriched in polar residues. Positions 225–252 (ASTQKQALSPSQEIPLEDQNEATKEIAQ) are disordered.

It belongs to the complex I 20 kDa subunit family. In terms of assembly, NDH-1 can be composed of about 15 different subunits; different subcomplexes with different compositions have been identified which probably have different functions. Requires [4Fe-4S] cluster as cofactor.

Its subcellular location is the cellular thylakoid membrane. The catalysed reaction is a plastoquinone + NADH + (n+1) H(+)(in) = a plastoquinol + NAD(+) + n H(+)(out). The enzyme catalyses a plastoquinone + NADPH + (n+1) H(+)(in) = a plastoquinol + NADP(+) + n H(+)(out). Functionally, NDH-1 shuttles electrons from an unknown electron donor, via FMN and iron-sulfur (Fe-S) centers, to quinones in the respiratory and/or the photosynthetic chain. The immediate electron acceptor for the enzyme in this species is believed to be plastoquinone. Couples the redox reaction to proton translocation, and thus conserves the redox energy in a proton gradient. Cyanobacterial NDH-1 also plays a role in inorganic carbon-concentration. This Prochlorococcus marinus (strain MIT 9211) protein is NAD(P)H-quinone oxidoreductase subunit K.